The primary structure comprises 297 residues: Acetylglutamate kinase (297 aa).

Substrate is bound by residues 73 to 74, Arg95, and Asn188; that span reads GG.

This sequence belongs to the acetylglutamate kinase family. ArgB subfamily.

The protein resides in the cytoplasm. It carries out the reaction N-acetyl-L-glutamate + ATP = N-acetyl-L-glutamyl 5-phosphate + ADP. It participates in amino-acid biosynthesis; L-arginine biosynthesis; N(2)-acetyl-L-ornithine from L-glutamate: step 2/4. Its function is as follows. Catalyzes the ATP-dependent phosphorylation of N-acetyl-L-glutamate. The chain is Acetylglutamate kinase from Trichormus variabilis (strain ATCC 29413 / PCC 7937) (Anabaena variabilis).